The primary structure comprises 77 residues: Protein RADIALIS-like 4 (77 aa).

Positions 6–61 (MSTSSWTAREDKQFEMALAKFDKDTPDRWQKIARAVGGKSTEEVKRHYELLLRDVN) constitute an SANT domain.

As to expression, expressed just outside the vascular bundles in the rosette stem and the leaf traces. Not detected in floral primordia.

It localises to the nucleus. Its function is as follows. Probable transcription factor. This Arabidopsis thaliana (Mouse-ear cress) protein is Protein RADIALIS-like 4 (RL4).